The following is a 416-amino-acid chain: Protein-lysine N-trimethyltransferase SMYD5 (416 aa).

The 331-residue stretch at 21 to 351 folds into the SET domain; it reads GSVEVRYVDS…PGEEICISYL (331 aa). An MYND-type zinc finger spans residues 98-136; that stretch reads PELCSVRKDLHQNCPHCQVMYCSAECRLAAAEQYHQILC. Tyr350 contributes to the S-adenosyl-L-methionine binding site. Positions 383–416 are disordered; sequence EADDPNVTSEEEEEEDEEEGEPEDAELGDEMTDV.

This sequence belongs to the class V-like SAM-binding methyltransferase superfamily. As to quaternary structure, interacts with the N-CoR complex. Interacts with EHMT2 and CBX5. In terms of processing, ubiquitinated and degradaed by the proteasome in response to mild hypothermia (32 degrees Celsius), relieving repression of the SP1 gene.

The protein resides in the cytoplasm. It catalyses the reaction L-lysyl-[protein] + 3 S-adenosyl-L-methionine = N(6),N(6),N(6)-trimethyl-L-lysyl-[protein] + 3 S-adenosyl-L-homocysteine + 3 H(+). The catalysed reaction is L-lysyl(20)-[histone H4] + 3 S-adenosyl-L-methionine = N(6),N(6),N(6)-trimethyl-L-lysyl(20)-[histone H4] + 3 S-adenosyl-L-homocysteine + 3 H(+). It carries out the reaction L-lysyl(36)-[histone H3] + 3 S-adenosyl-L-methionine = N(6),N(6),N(6)-trimethyl-L-lysyl(36)-[histone H3] + 3 S-adenosyl-L-homocysteine + 3 H(+). Protein-lysine N-trimethyltransferase that specifically catalyzes trimethylation of 'Lys-22' of the RPL40/eL40 subunit of the 60S ribosome, thereby promoting translation elongation and protein synthesis. May also act as a histone methyltransferase in the context of histone octamers, but not on nucleosome substrates: trimethylates 'Lys-36' of histone H3 and 'Lys-20' of histone H4 to form H3K36me3 and H4K20me3, respectively. The histone methyltransferase activity, which is independent of its SET domain, is however unsure in vivo. In association with the NCoR corepressor complex, involved in the repression of toll-like receptor 4 (TLR4)-target inflammatory genes in macrophages, possibly by catalyzing the formation of H4K20me3 at the gene promoters. Plays an important role in embryonic stem (ES) cell self-renewal and differentiation. Maintains genome stability of ES cells during differentiation through regulation of heterochromatin formation and repression of endogenous repetitive DNA elements by promoting H4K20me3 marks. Acts as a regulator of the hypothermia response: its degradation in response to mild hypothermia relieves the formation of H3K36me3 at gene promoters, allowing expression of the neuroprotective gene SP1. The protein is Protein-lysine N-trimethyltransferase SMYD5 of Mus musculus (Mouse).